We begin with the raw amino-acid sequence, 481 residues long: Thiol protease (481 aa).

The Calpain catalytic domain maps to 169–481 (DLREQALSST…ENFWYIAYMY (313 aa)). Residues C229, H406, and N426 contribute to the active site.

This sequence belongs to the peptidase C2 family.

With respect to regulation, inactive below 20 degrees Celsius and pH 6.0. Inhibited by divalent cations. Functionally, thiol protease. Probably an important virulence factor. This is Thiol protease (tpr) from Porphyromonas gingivalis (strain ATCC BAA-308 / W83).